The sequence spans 304 residues: Fructose permease IIC component (304 aa).

Residues 1 to 304 form the PTS EIIC type-2 domain; it reads IHSADPKDPT…GIIKKPVEEK (304 aa). Helical transmembrane passes span 20–40, 62–82, 98–118, 140–160, 181–201, 214–234, 238–258, and 277–297; these read FIGS…FIAM, NAGF…VILL, PVLI…QFVI, NLVL…GGPL, AAIM…TTFF, ITCY…FAAA, VIPA…FFRV, and LLYL…LGII.

It localises to the cell membrane. Its function is as follows. The phosphoenolpyruvate-dependent sugar phosphotransferase system (PTS), a major carbohydrate active -transport system, catalyzes the phosphorylation of incoming sugar substrates concomitant with their translocation across the cell membrane. This system is involved in fructose transport. The polypeptide is Fructose permease IIC component (fruA) (Bacillus amyloliquefaciens (Bacillus velezensis)).